The sequence spans 95 residues: Protein TusB (95 aa).

It belongs to the DsrH/TusB family. Heterohexamer, formed by a dimer of trimers. The hexameric TusBCD complex contains 2 copies each of TusB, TusC and TusD. The TusBCD complex interacts with TusE.

Its subcellular location is the cytoplasm. Functionally, part of a sulfur-relay system required for 2-thiolation of 5-methylaminomethyl-2-thiouridine (mnm(5)s(2)U) at tRNA wobble positions. This is Protein TusB from Pectobacterium atrosepticum (strain SCRI 1043 / ATCC BAA-672) (Erwinia carotovora subsp. atroseptica).